A 371-amino-acid chain; its full sequence is Peptide chain release factor 2 (371 aa).

Residue Gln-252 is modified to N5-methylglutamine.

The protein belongs to the prokaryotic/mitochondrial release factor family. Methylated by PrmC. Methylation increases the termination efficiency of RF2.

It localises to the cytoplasm. Functionally, peptide chain release factor 2 directs the termination of translation in response to the peptide chain termination codons UGA and UAA. The sequence is that of Peptide chain release factor 2 from Staphylococcus haemolyticus (strain JCSC1435).